The following is a 327-amino-acid chain: UPF0285 protein Maeo_0978 (327 aa).

It belongs to the UPF0285 family.

The chain is UPF0285 protein Maeo_0978 from Methanococcus aeolicus (strain ATCC BAA-1280 / DSM 17508 / OCM 812 / Nankai-3).